The sequence spans 432 residues: LYTYPENWRAFKALIAAQYSGAQVRVLSAPPHFHFGQTNHTPEFLRKFPAGKVPAFEGDDGFCVFESNAIAYYVSNEELRGSTPEAAAQVVQWVSFADSDIVPPASTWVFPTLGIMHYNKQATENAKDEVRRVLGLLDAHLKTRTFLVGERVTLADITVVCTLLWLYKQVLEPSFRQAFPNTNRWFLTCINQPQFRAVLGEVKLCEKMAQFDAKKFAESQPKKDTPRKEKGSREEKQKPQAERKEEKKAAAPAPEEELDECEQALAAEPKAKDPFAHLPKSTFVLDEFKRKYSNEDTLSVALPYFWEHFDKDGWSLWYSEYRFPEELTQTFMSCNLITGMFQRLDKLRKNAFASVILFGTNNSSSISGVWVFRGQELAFPLSPDWQVDYESYTWRKLDPGSEETQTLVREYFSWEGAYQHVGKAFNQGKIFK.

A GST N-terminal domain is found at 1–82 (LYTYPENWRA…YVSNEELRGS (82 aa)). Residues 83–211 (TPEAAAQVVQ…VKLCEKMAQF (129 aa)) enclose the GST C-terminal domain. Residues lysine 142 and lysine 207 each carry the N6-acetyllysine modification. Over residues 216 to 249 (FAESQPKKDTPRKEKGSREEKQKPQAERKEEKKA) the composition is skewed to basic and acidic residues. Positions 216 to 258 (FAESQPKKDTPRKEKGSREEKQKPQAERKEEKKAAAPAPEEEL) are disordered. A Glycyl lysine isopeptide (Lys-Gly) (interchain with G-Cter in SUMO1) cross-link involves residue lysine 248. An EF-1-gamma C-terminal domain is found at 271 to 432 (AKDPFAHLPK…KAFNQGKIFK (162 aa)). A Glycyl lysine isopeptide (Lys-Gly) (interchain with G-Cter in SUMO2) cross-link involves residue lysine 280. At lysine 396 the chain carries N6-acetyllysine. N6-acetyllysine; alternate is present on lysine 429. At lysine 429 the chain carries N6-malonyllysine; alternate.

As to quaternary structure, EF-1 is composed of four subunits: alpha, beta, delta, and gamma.

In terms of biological role, probably plays a role in anchoring the complex to other cellular components. The sequence is that of Elongation factor 1-gamma (EEF1G) from Sus scrofa (Pig).